Reading from the N-terminus, the 312-residue chain is CD-NTase-associated protein 12 (312 aa).

The TIR domain occupies 5 to 127 (RLFIGSSSEE…FNGLTLARFD (123 aa)).

In the C-terminal section; belongs to the bacterial STING family. Forms homodimers; in the presence of c-di-GMP forms filaments with an ordered array of parallel-stacked subunits.

The catalysed reaction is NAD(+) + H2O = ADP-D-ribose + nicotinamide + H(+). NAD(+) hydrolase activity is strongly stimulated by c-di-GMP, weakly by 3'3'-cGAMP, very weakly by c-di-AMP but not at all by 2'3'-cGAMP. Self-association of TIR domains is required for NADase activity. Its function is as follows. Effector protein of a CBASS antiviral system with NAD(+) hydrolase activity. CBASS (cyclic oligonucleotide-based antiphage signaling system) provides immunity against bacteriophage. The CD-NTase protein synthesizes cyclic nucleotides in response to infection; these serve as specific second messenger signals. The signals activate a diverse range of effectors, leading to bacterial cell death and thus abortive phage infection. A type I-D CBASS(GG) system. Functionally, binds c-di-GMP, does not bind cUMP-AMP. Upon activation by c-di-GMP forms filaments which hydrolyze NAD(+); filament formation is required for enzyme activation. The polypeptide is CD-NTase-associated protein 12 (Niabella drilacis (strain DSM 25811 / CCM 8410 / CCUG 62505 / LMG 26954 / E90)).